A 349-amino-acid chain; its full sequence is S-adenosylmethionine:tRNA ribosyltransferase-isomerase (349 aa).

This sequence belongs to the QueA family. In terms of assembly, monomer.

It is found in the cytoplasm. The enzyme catalyses 7-aminomethyl-7-carbaguanosine(34) in tRNA + S-adenosyl-L-methionine = epoxyqueuosine(34) in tRNA + adenine + L-methionine + 2 H(+). It functions in the pathway tRNA modification; tRNA-queuosine biosynthesis. Its function is as follows. Transfers and isomerizes the ribose moiety from AdoMet to the 7-aminomethyl group of 7-deazaguanine (preQ1-tRNA) to give epoxyqueuosine (oQ-tRNA). The chain is S-adenosylmethionine:tRNA ribosyltransferase-isomerase from Pseudomonas putida (strain GB-1).